A 158-amino-acid polypeptide reads, in one-letter code: FUN14 domain-containing protein 1 (158 aa).

The short motif at 21–24 (YEVV) is the YXXL element. 2 helical membrane passes run 51 to 70 (YSVTTQLVMGGLTGWCAGYL) and 77 to 98 (IAATAVGGGFLLLQIANHSGYV).

The protein belongs to the FUN14 family.

Its subcellular location is the mitochondrion outer membrane. In terms of biological role, acts as an activator of hypoxia-induced mitophagy, an important mechanism for mitochondrial quality control. The sequence is that of FUN14 domain-containing protein 1 (fundc1) from Tetraodon nigroviridis (Spotted green pufferfish).